We begin with the raw amino-acid sequence, 1504 residues long: Nischarin (1504 aa).

Ala2 carries the post-translational modification N-acetylalanine. The necessary for binding to phosphoinositide-3-P; not sufficient for targeting to endosomes stretch occupies residues 2 to 133; that stretch reads ATARTFGPER…GITAALAEEL (132 aa). The PX domain maps to 11–121; the sequence is REAEPAKEAR…AHFLHFHFYE (111 aa). A necessary for homooligomerization and targeting to endosomes region spans residues 120-695; the sequence is YEINGITAAL…ERLALEWALG (576 aa). The tract at residues 245-869 is interaction with PAK1; that stretch reads LSVRFSATSM…LVYSDKRMVQ (625 aa). LRR repeat units lie at residues 288 to 309, 311 to 332, 333 to 354, 356 to 377, 378 to 399, and 403 to 424; these read ALTT…VKLI, KIEF…QHLY, NLVH…HTKL, NIKT…HKLY, SLVN…RSIG, and CLEH…RTKV. The segment covering 463-478 has biased composition (basic and acidic residues); the sequence is KSKLSNPEKKGGEDSR. Disordered stretches follow at residues 463-501, 524-547, 554-573, and 628-687; these read KSKL…SASL, SSTD…LESI, SDDL…EHAE, and REEG…EEER. Residues Ser541, Ser543, and Ser546 each carry the phosphoserine modification. Positions 634–695 form a coiled coil; sequence EQGEEEDEEE…ERLALEWALG (62 aa). 2 stretches are compositionally biased toward acidic residues: residues 635-649 and 661-685; these read QGEE…EEDV and DVEE…EAEE. The tract at residues 660-869 is interaction with LIMK; sequence PDVEEEEGGG…LVYSDKRMVQ (210 aa). The interaction with ITGA5 stretch occupies residues 709 to 807; sequence KVLWCFLIHV…ANLHEFHADL (99 aa). The interval 1016–1104 is disordered; that stretch reads TPGTGGSPQG…PAPPPAEAPA (89 aa). Ser1022 carries the phosphoserine modification. Basic and acidic residues predominate over residues 1032–1043; that stretch reads PAERRASNDQRP. Positions 1063-1078 are enriched in low complexity; it reads PAAASASGPAKTPAPA. Thr1282 carries the phosphothreonine modification. Position 1284 is a phosphoserine (Ser1284).

Homooligomer. Interacts with GRB2. Interacts with PIK3R1; probably associates with the PI3-kinase complex. Interacts with IRS4. Found in a complex with ITGA5 and PAK1. Found in a complex with LIMK1 and PAK1. Interacts with ITGA5 (via cytoplasmic domain); this interaction is direct. Interacts with PAK1 (via kinase domain); this interaction is direct and is increased upon activation of PAK1. Interacts with LIMK1 (via PDZ and kinase domain); this interaction is direct. Interacts with LIMK2; this interaction depends on LIMK2 activity. Interacts with RAC1 (activated state). Interacts with STK11; this interaction may increase STK11 activity. As to expression, isoform 1, isoform 3 and isoform 4 are expressed in brain. Isoform 1 is expressed in endocrine tissues.

It is found in the cell membrane. Its subcellular location is the cytoplasm. It localises to the early endosome. The protein resides in the recycling endosome. Its function is as follows. Acts either as the functional imidazoline-1 receptor (I1R) candidate or as a membrane-associated mediator of the I1R signaling. Binds numerous imidazoline ligands that induces initiation of cell-signaling cascades triggering to cell survival, growth and migration. Its activation by the agonist rilmenidine induces an increase in phosphorylation of mitogen-activated protein kinases MAPK1 and MAPK3 in rostral ventrolateral medulla (RVLM) neurons that exhibited rilmenidine-evoked hypotension. Blocking its activation with efaroxan abolished rilmenidine-induced mitogen-activated protein kinase phosphorylation in RVLM neurons. Acts as a modulator of Rac-regulated signal transduction pathways. Suppresses Rac1-stimulated cell migration by interacting with PAK1 and inhibiting its kinase activity. Also blocks Pak-independent Rac signaling by interacting with RAC1 and inhibiting Rac1-stimulated NF-kB response element and cyclin D1 promoter activation. Also inhibits LIMK1 kinase activity by reducing LIMK1 'Tyr-508' phosphorylation. Inhibits Rac-induced cell migration and invasion in breast and colon epithelial cells. Inhibits lamellipodia formation, when overexpressed. Plays a role in protection against apoptosis. Involved in association with IRS4 in the enhancement of insulin activation of MAPK1 and MAPK3. When overexpressed, induces a redistribution of cell surface ITGA5 integrin to intracellular endosomal structures. The protein is Nischarin (NISCH) of Homo sapiens (Human).